The primary structure comprises 275 residues: Putative Ig-like V-type domain-containing protein FPV055 (275 aa).

2 consecutive Ig-like V-type domains span residues 25-122 (KTFV…MNLG) and 140-239 (PRRS…KSLS).

The sequence is that of Putative Ig-like V-type domain-containing protein FPV055 from Fowlpox virus (strain NVSL) (FPV).